Consider the following 134-residue polypeptide: uncharacterized protein (134 aa).

Transmembrane regions (helical) follow at residues 21-41, 52-72, and 95-115; these read FSTT…LYLI, LVLL…TPYE, and IVMA…VYII.

The protein localises to the host membrane. This is an uncharacterized protein from Acidianus two-tailed virus (ATV).